The sequence spans 525 residues: GMP synthase [glutamine-hydrolyzing] (525 aa).

The region spanning 8–207 (KILILDFGSQ…ALDICGCAAN (200 aa)) is the Glutamine amidotransferase type-1 domain. Cys85 functions as the Nucleophile in the catalytic mechanism. Residues His181 and Glu183 contribute to the active site. Positions 208 to 400 (WKPSSIIEDA…LGLPYNMLYR (193 aa)) constitute a GMPS ATP-PPase domain. 235 to 241 (SGGVDSS) provides a ligand contact to ATP.

As to quaternary structure, homodimer.

It carries out the reaction XMP + L-glutamine + ATP + H2O = GMP + L-glutamate + AMP + diphosphate + 2 H(+). The protein operates within purine metabolism; GMP biosynthesis; GMP from XMP (L-Gln route): step 1/1. In terms of biological role, catalyzes the synthesis of GMP from XMP. This chain is GMP synthase [glutamine-hydrolyzing], found in Shewanella baltica (strain OS223).